The primary structure comprises 1949 residues: Protein GREB1 (1949 aa).

Disordered stretches follow at residues 52 to 77 (EGGSRVDNEEEEEEGEGGLETNGPPN), 302 to 334 (ILSNSGPPKKRHKGWSPESPSAPDGGCPQGGGN), and 1085 to 1210 (EALE…GQRS). The segment covering 59–68 (NEEEEEEGEG) has biased composition (acidic residues). Composition is skewed to basic and acidic residues over residues 1085-1095 (EALESDAEKLS) and 1110-1126 (TSEKRSPMKRERSRSHD). Positions 1127-1147 (SASSSLSSKASGSALGGESSA) are enriched in low complexity. Positions 1166-1178 (PAEEGRAPGEKQR) are enriched in basic and acidic residues. Residues 1868-1888 (DLLFSGLLLYLCDSFVGASFL) traverse the membrane as a helical segment.

Belongs to the GREB1 family. As to expression, expressed in proliferating prostatic tissue and prostate cancer.

It is found in the membrane. Functionally, may play a role in estrogen-stimulated cell proliferation. Acts as a regulator of hormone-dependent cancer growth in breast and prostate cancers. This Homo sapiens (Human) protein is Protein GREB1 (GREB1).